Here is a 382-residue protein sequence, read N- to C-terminus: ADP,ATP carrier protein, mitochondrial (382 aa).

The transit peptide at 1 to 71 (MAEQANQPTV…PMMSSSPIFA (71 aa)) directs the protein to the mitochondrion. Solcar repeat units lie at residues 80–173 (KNFM…FKRL), 185–277 (KWFG…LKPV), and 285–371 (DNFF…LQIL). A run of 5 helical transmembrane segments spans residues 82–109 (FMID…VKLL), 150–174 (TANV…KRLF), 183–203 (YWKW…SSLF), 253–274 (FNIS…YDSL), and 288–308 (FASF…SYPI). 2 residues coordinate ADP: R155 and K167. R312 provides a ligand contact to ADP. The interval 312 to 317 (RRRMMM) is important for transport activity. Positions 312–317 (RRRMMM) match the Nucleotide carrier signature motif motif. The chain crosses the membrane as a helical span at residues 348–368 (AGANILRAIAGAGVLSGYDQL).

This sequence belongs to the mitochondrial carrier (TC 2.A.29) family. In terms of assembly, monomer.

Its subcellular location is the mitochondrion inner membrane. The enzyme catalyses ADP(in) + ATP(out) = ADP(out) + ATP(in). Its activity is regulated as follows. The matrix-open state (m-state) is inhibited by the membrane-permeable bongkrekic acid (BKA). The cytoplasmic-open state (c-state) is inhibited by the membrane-impermeable toxic inhibitor carboxyatractyloside (CATR). Functionally, ADP:ATP antiporter that mediates import of ADP into the mitochondrial matrix for ATP synthesis, and export of ATP out to fuel the cell. Cycles between the cytoplasmic-open state (c-state) and the matrix-open state (m-state): operates by the alternating access mechanism with a single substrate-binding site intermittently exposed to either the cytosolic (c-state) or matrix (m-state) side of the inner mitochondrial membrane. In Oryza sativa subsp. japonica (Rice), this protein is ADP,ATP carrier protein, mitochondrial.